The chain runs to 158 residues: Ribosomal RNA large subunit methyltransferase H (158 aa).

Residues Leu73, Gly107, and 126–131 (FGEITL) each bind S-adenosyl-L-methionine.

It belongs to the RNA methyltransferase RlmH family. As to quaternary structure, homodimer.

It localises to the cytoplasm. It catalyses the reaction pseudouridine(1915) in 23S rRNA + S-adenosyl-L-methionine = N(3)-methylpseudouridine(1915) in 23S rRNA + S-adenosyl-L-homocysteine + H(+). Functionally, specifically methylates the pseudouridine at position 1915 (m3Psi1915) in 23S rRNA. The protein is Ribosomal RNA large subunit methyltransferase H of Rubrobacter xylanophilus (strain DSM 9941 / JCM 11954 / NBRC 16129 / PRD-1).